A 383-amino-acid chain; its full sequence is tRNA-specific 2-thiouridylase MnmA (383 aa).

Residues 30 to 37 (GMSGGVDS) and M56 contribute to the ATP site. The tract at residues 116-118 (NPD) is interaction with target base in tRNA. C121 acts as the Nucleophile in catalysis. Cysteines 121 and 218 form a disulfide. ATP is bound at residue G146. The interval 168–170 (KDQ) is interaction with tRNA. C218 serves as the catalytic Cysteine persulfide intermediate. The interaction with tRNA stretch occupies residues 330 to 331 (RY).

It belongs to the MnmA/TRMU family.

Its subcellular location is the cytoplasm. It catalyses the reaction S-sulfanyl-L-cysteinyl-[protein] + uridine(34) in tRNA + AH2 + ATP = 2-thiouridine(34) in tRNA + L-cysteinyl-[protein] + A + AMP + diphosphate + H(+). Functionally, catalyzes the 2-thiolation of uridine at the wobble position (U34) of tRNA, leading to the formation of s(2)U34. The protein is tRNA-specific 2-thiouridylase MnmA of Haemophilus influenzae (strain 86-028NP).